The following is a 373-amino-acid chain: Ribonuclease D (373 aa).

In terms of domain architecture, 3'-5' exonuclease spans 3–171 (YQLITTDAGL…MAKRLVQETE (169 aa)). The HRDC domain occupies 210-289 (RPRQLGCLQK…AEAAELEESA (80 aa)).

It belongs to the RNase D family. A divalent metal cation serves as cofactor.

The protein localises to the cytoplasm. It carries out the reaction Exonucleolytic cleavage that removes extra residues from the 3'-terminus of tRNA to produce 5'-mononucleotides.. Exonuclease involved in the 3' processing of various precursor tRNAs. Initiates hydrolysis at the 3'-terminus of an RNA molecule and releases 5'-mononucleotides. The chain is Ribonuclease D from Serratia proteamaculans (strain 568).